The primary structure comprises 248 residues: MLDGLVTAMRTLTVLSVPGKDADEFSRSLYWFPLVGLLLGLLQAALAWIGMVSQIPEFSALLVLLSGVLLTRAIHADGLADLADGFFGGKTRESRLRIMKDPAVGSFGVIALILLFLFKWIALTRIVAHGQYEWIVSGIVLARFVQVVLASVMTYAREGEGTACRFVAGAGGWHVVVAALFSLLILVLVMKMQRLPIVVALLATAVSGSLTGMLAAKKIHGVTGDVLGASSEMTEALVWCSALLLLFY.

Helical transmembrane passes span 32–52 (FPLV…IGMV), 60–80 (ALLV…DGLA), 103–123 (AVGS…WIAL), 134–154 (WIVS…SVMT), 170–190 (AGGW…VLVM), 195–215 (LPIV…GMLA), and 227–247 (LGAS…LLLF).

The protein belongs to the CobS family. It depends on Mg(2+) as a cofactor.

It localises to the cell inner membrane. It carries out the reaction alpha-ribazole + adenosylcob(III)inamide-GDP = adenosylcob(III)alamin + GMP + H(+). It catalyses the reaction alpha-ribazole 5'-phosphate + adenosylcob(III)inamide-GDP = adenosylcob(III)alamin 5'-phosphate + GMP + H(+). The protein operates within cofactor biosynthesis; adenosylcobalamin biosynthesis; adenosylcobalamin from cob(II)yrinate a,c-diamide: step 7/7. In terms of biological role, joins adenosylcobinamide-GDP and alpha-ribazole to generate adenosylcobalamin (Ado-cobalamin). Also synthesizes adenosylcobalamin 5'-phosphate from adenosylcobinamide-GDP and alpha-ribazole 5'-phosphate. The polypeptide is Adenosylcobinamide-GDP ribazoletransferase (Prosthecochloris aestuarii (strain DSM 271 / SK 413)).